Here is a 92-residue protein sequence, read N- to C-terminus: Large ribosomal subunit protein eL37 (92 aa).

Residues Cys19, Cys22, Cys34, and Cys37 each coordinate Zn(2+). A C4-type zinc finger spans residues 19 to 37 (CRRCGRSSYHIQKSKCAQC).

It belongs to the eukaryotic ribosomal protein eL37 family. Requires Zn(2+) as cofactor.

Its function is as follows. Binds to the 23S rRNA. This is Large ribosomal subunit protein eL37 (RpL37) from Spodoptera frugiperda (Fall armyworm).